Reading from the N-terminus, the 266-residue chain is rRNA adenine N-6-methyltransferase (266 aa).

S-adenosyl-L-methionine-binding residues include His-14, Thr-16, Gly-41, Glu-62, Asp-87, and Asn-103.

Belongs to the class I-like SAM-binding methyltransferase superfamily. rRNA adenine N(6)-methyltransferase family.

Involved in erythromycin resistance. This is rRNA adenine N-6-methyltransferase (ermF) from Bacteroides fragilis.